We begin with the raw amino-acid sequence, 631 residues long: Transmembrane and coiled-coil domain-containing protein 4 (631 aa).

A disordered region spans residues 1–26 (MATWNRPHPRLPVAPEPVAEGESQQP). The stretch at 153-183 (EEVFLESLKDAKEEESETAEESRKRKEKRRK) forms a coiled coil. A run of 4 helical transmembrane segments spans residues 187-203 (YLLIGLATVGGGTVIGV), 204-220 (TGGLAAPLVAAGAATII), 228-248 (LGSVAGIAVMTSLFGAAGAGL), and 343-363 (LSGIVAALTLPASLLSVANVI). The segment at 523 to 631 (WSEKGLPLAP…ETQESCAELD (109 aa)) is disordered. Residues 571–590 (IPSSASQAQVPAGLDQSTED) are compositionally biased toward polar residues.

The protein belongs to the TMCO4 family.

The protein resides in the membrane. This chain is Transmembrane and coiled-coil domain-containing protein 4 (Tmco4), found in Rattus norvegicus (Rat).